The chain runs to 137 residues: MGWLRPGPRPLCPPARASWAFSHRFPSPLAPRRSPTPFFMASLLCCGPKLAACGIVLSAWGVIMLIMLGIFFNVHSAVLIEDVPFTEKDFENGPQNIYNLYEQVSYNCFIAAGLYLLLGGFSFCQVRLNKRKEYMVR.

Transmembrane regions (helical) follow at residues 52–72 (ACGI…GIFF) and 104–124 (VSYN…FSFC).

This sequence belongs to the RNase K family. As to quaternary structure, interacts with the proton translocation complex V0 of the V-ATPase. Interacts with ATP6AP1. As to expression, widely expressed.

The protein resides in the endomembrane system. Its subcellular location is the cytoplasmic vesicle. It is found in the clathrin-coated vesicle membrane. In terms of biological role, endoribonuclease which preferentially cleaves ApU and ApG phosphodiester bonds. Hydrolyzes UpU bonds at a lower rate. Regulates the activity of vacuolar (H+)-ATPase (V-ATPase) which is responsible for acidifying and maintaining the pH of intracellular compartments. Required at an early stage of receptor-mediated endocytosis. Its function is as follows. (Microbial infection) Required at an early stage of both clathrin-mediated and clathrin-independent endocytic uptake of a diverse set of viruses, including dengue, West Nile, Sindbis, Rift Valley Fever, influenza, and human rhinoviruses. This Homo sapiens (Human) protein is Ribonuclease kappa (RNASEK).